A 98-amino-acid chain; its full sequence is NADH-ubiquinone oxidoreductase chain 4L (98 aa).

3 helical membrane passes run 2 to 22 (PSISININLAFAAALLGMLMF), 29 to 49 (SLLCLEGMMLSMFTLSTLIIL), and 61 to 81 (ILLLVFAACEAAIGLALLVTV).

This sequence belongs to the complex I subunit 4L family. As to quaternary structure, core subunit of respiratory chain NADH dehydrogenase (Complex I) which is composed of 45 different subunits.

The protein localises to the mitochondrion inner membrane. The catalysed reaction is a ubiquinone + NADH + 5 H(+)(in) = a ubiquinol + NAD(+) + 4 H(+)(out). In terms of biological role, core subunit of the mitochondrial membrane respiratory chain NADH dehydrogenase (Complex I) which catalyzes electron transfer from NADH through the respiratory chain, using ubiquinone as an electron acceptor. Part of the enzyme membrane arm which is embedded in the lipid bilayer and involved in proton translocation. The sequence is that of NADH-ubiquinone oxidoreductase chain 4L (MT-ND4L) from Microcebus mamiratra (Claire's mouse lemur).